The primary structure comprises 344 residues: Cytochrome c biogenesis protein CcsA (344 aa).

8 consecutive transmembrane segments (helical) span residues 21–41, 45–65, 80–100, 106–126, 151–171, 252–272, 287–307, and 313–333; these read NVAFAVCLGAMLFYWGGAAFP, LLSELGLAGMIGANLTIAALL, LYESLFFLAWGITALHLLALH, WVGVTTAPLATGVVAFAALAL, VMLLAYAALLVGSLLAIAFLI, LIGLGFPLLTIGIIAGAVWAN, WALITWLVFAAYLHARITKGW, and ALLASLGFGVVWVCYLGVNFL.

It belongs to the CcmF/CycK/Ccl1/NrfE/CcsA family. In terms of assembly, may interact with ccs1.

Its subcellular location is the cellular thylakoid membrane. Required during biogenesis of c-type cytochromes (cytochrome c6 and cytochrome f) at the step of heme attachment. This Synechococcus sp. (strain JA-3-3Ab) (Cyanobacteria bacterium Yellowstone A-Prime) protein is Cytochrome c biogenesis protein CcsA.